The following is a 326-amino-acid chain: Putative HTH-type transcriptional regulatory protein MMP0678 (326 aa).

Residues 128 to 183 form the HTH cro/C1-type domain; the sequence is LRETREKLKISVGELAEVSRVSRKTIYKYEQNEANPSAEVAIKIEEYLDVPLIKGI. Residues 139–158 constitute a DNA-binding region (H-T-H motif); that stretch reads VGELAEVSRVSRKTIYKYEQ.

This chain is Putative HTH-type transcriptional regulatory protein MMP0678, found in Methanococcus maripaludis (strain DSM 14266 / JCM 13030 / NBRC 101832 / S2 / LL).